The following is a 505-amino-acid chain: AMP phosphorylase (505 aa).

AMP is bound by residues glycine 170, serine 196 to serine 201, and threonine 205. Aspartate 258 acts as the Proton donor in catalysis. AMP is bound by residues serine 266 and lysine 290.

Belongs to the thymidine/pyrimidine-nucleoside phosphorylase family. Type 2 subfamily.

It carries out the reaction AMP + phosphate = alpha-D-ribose 1,5-bisphosphate + adenine. The enzyme catalyses CMP + phosphate = cytosine + alpha-D-ribose 1,5-bisphosphate. It catalyses the reaction UMP + phosphate = alpha-D-ribose 1,5-bisphosphate + uracil. In terms of biological role, catalyzes the conversion of AMP and phosphate to adenine and ribose 1,5-bisphosphate (R15P). Exhibits phosphorylase activity toward CMP and UMP in addition to AMP. Functions in an archaeal AMP degradation pathway, together with R15P isomerase and RubisCO. The sequence is that of AMP phosphorylase from Methanococcus vannielii (strain ATCC 35089 / DSM 1224 / JCM 13029 / OCM 148 / SB).